The primary structure comprises 398 residues: Enoyl-[acyl-carrier-protein] reductase [NADH] (398 aa).

Residues 48 to 53 (GASTGY), 74 to 75 (FE), 111 to 112 (DA), and 139 to 140 (LA) contribute to the NAD(+) site. Tyrosine 225 provides a ligand contact to substrate. Tyrosine 235 serves as the catalytic Proton donor. NAD(+) contacts are provided by residues lysine 244 and 273–275 (VVT).

This sequence belongs to the TER reductase family. As to quaternary structure, monomer.

The enzyme catalyses a 2,3-saturated acyl-[ACP] + NAD(+) = a (2E)-enoyl-[ACP] + NADH + H(+). Its pathway is lipid metabolism; fatty acid biosynthesis. Involved in the final reduction of the elongation cycle of fatty acid synthesis (FAS II). Catalyzes the reduction of a carbon-carbon double bond in an enoyl moiety that is covalently linked to an acyl carrier protein (ACP). The protein is Enoyl-[acyl-carrier-protein] reductase [NADH] of Paraburkholderia phytofirmans (strain DSM 17436 / LMG 22146 / PsJN) (Burkholderia phytofirmans).